A 273-amino-acid polypeptide reads, in one-letter code: Putative phosphoenolpyruvate synthase regulatory protein (273 aa).

ADP is bound at residue 153 to 160 (AVSRAGKT).

This sequence belongs to the pyruvate, phosphate/water dikinase regulatory protein family. PSRP subfamily.

The catalysed reaction is [pyruvate, water dikinase] + ADP = [pyruvate, water dikinase]-phosphate + AMP + H(+). The enzyme catalyses [pyruvate, water dikinase]-phosphate + phosphate + H(+) = [pyruvate, water dikinase] + diphosphate. Its function is as follows. Bifunctional serine/threonine kinase and phosphorylase involved in the regulation of the phosphoenolpyruvate synthase (PEPS) by catalyzing its phosphorylation/dephosphorylation. The sequence is that of Putative phosphoenolpyruvate synthase regulatory protein from Stenotrophomonas maltophilia (strain R551-3).